Reading from the N-terminus, the 214-residue chain is Isochorismatase family protein 2B (214 aa).

This sequence belongs to the isochorismatase family.

This is Isochorismatase family protein 2B from Dictyostelium discoideum (Social amoeba).